The primary structure comprises 139 residues: Large ribosomal subunit protein uL16 (139 aa).

Basic residues predominate over residues 1 to 17 (MLMPKRVKYRKSQRGRM). The disordered stretch occupies residues 1 to 24 (MLMPKRVKYRKSQRGRMKGNSGRG).

It belongs to the universal ribosomal protein uL16 family. As to quaternary structure, part of the 50S ribosomal subunit.

In terms of biological role, binds 23S rRNA and is also seen to make contacts with the A and possibly P site tRNAs. The protein is Large ribosomal subunit protein uL16 of Chlorobium limicola (strain DSM 245 / NBRC 103803 / 6330).